Here is a 676-residue protein sequence, read N- to C-terminus: Methionine--tRNA ligase (676 aa).

A 'HIGH' region motif is present at residues 15 to 25; the sequence is PYANGSIHLGH. Zn(2+)-binding residues include C146, C149, C159, and C162. Positions 332–336 match the 'KMSKS' region motif; sequence KMSKS. Position 335 (K335) interacts with ATP. One can recognise a tRNA-binding domain in the interval 574 to 676; it reads DFAKVDMRIA…SGAQPGQQVK (103 aa).

The protein belongs to the class-I aminoacyl-tRNA synthetase family. MetG type 1 subfamily. As to quaternary structure, homodimer. The cofactor is Zn(2+).

Its subcellular location is the cytoplasm. It catalyses the reaction tRNA(Met) + L-methionine + ATP = L-methionyl-tRNA(Met) + AMP + diphosphate. Functionally, is required not only for elongation of protein synthesis but also for the initiation of all mRNA translation through initiator tRNA(fMet) aminoacylation. The chain is Methionine--tRNA ligase from Erwinia tasmaniensis (strain DSM 17950 / CFBP 7177 / CIP 109463 / NCPPB 4357 / Et1/99).